An 81-amino-acid chain; its full sequence is Protein PYP1 (81 aa).

The transit peptide at 1–25 (MAFVSGFTGMPVTARVSKAVCRTRM) directs the protein to the chloroplast. Residues 27–57 (LEGGKSSGGGEATRDPEPTAVDPNDPKGKQQ) are disordered.

The protein localises to the plastid. It localises to the chloroplast. This Pyropia yezoensis (Susabi-nori) protein is Protein PYP1.